The primary structure comprises 589 residues: Kelch-like protein 25 (589 aa).

A BTB domain is found at 46-114 (TDVTLWAGDR…AYSSRIVINE (69 aa)). The BACK domain occupies 149–250 (CLGMMVLSDA…LPSDCLKNAV (102 aa)). Kelch repeat units follow at residues 296 to 340 (TLLI…AIGC), 341 to 388 (KVYV…ELEN), 389 to 444 (CLYV…SAKL), 446 to 492 (LFVF…VLGS), 493 to 538 (QIFI…ASGN), and 539 to 585 (KLYV…STWK).

As to quaternary structure, component of the BCR(KLHL25) E3 ubiquitin ligase complex, at least composed of CUL3, KLHL25 and RBX1.

The protein operates within protein modification; protein ubiquitination. Substrate-specific adapter of a BCR (BTB-CUL3-RBX1) E3 ubiquitin ligase complex involved in various processes, such as translation homeostasis and lipid synthesis. The BCR(KLHL25) ubiquitin ligase complex acts by mediating ubiquitination of hypophosphorylated EIF4EBP1 (4E-BP1): ubiquitination and subsequent degradation of hypophosphorylated EIF4EBP1 (4E-BP1) probably serves as a homeostatic mechanism to maintain translation and prevent eIF4E inhibition when eIF4E levels are low. The BCR(KLHL25) complex does not target EIF4EBP1 (4E-BP1) when it is hyperphosphorylated or associated with eIF4E. The BCR(KLHL25) complex also acts as a regulator of lipid synthesis by mediating ubiquitination and degradation of ACLY, thereby inhibiting lipid synthesis. BCR(KLHL25)-mediated degradation of ACLY promotes fatty acid oxidation and is required for differentiation of inducible regulatory T (iTreg) cells. This is Kelch-like protein 25 from Mus musculus (Mouse).